We begin with the raw amino-acid sequence, 530 residues long: Chondroitin sulfate N-acetylgalactosaminyltransferase 1 (530 aa).

The Cytoplasmic segment spans residues 1–12 (MVRRGLLGWISR). Residues 13–33 (VVILLVLLCCAISVLYMLACT) traverse the membrane as a helical; Signal-anchor for type II membrane protein segment. The Lumenal portion of the chain corresponds to 34-530 (PKGDQEQLGL…QKQKASSKKT (497 aa)). Residues 57–93 (AVLQEREEQHRNYVNSLKRQIAQLKDELQARSEQFRS) adopt a coiled-coil conformation. A disordered region spans residues 88-107 (SEQFRSGQDQASDATSLRSG). Polar residues predominate over residues 91 to 105 (FRSGQDQASDATSLR). Residues Asn313 and Asn322 are each glycosylated (N-linked (GlcNAc...) asparagine). Positions 358 and 475 each coordinate a divalent metal cation.

This sequence belongs to the chondroitin N-acetylgalactosaminyltransferase family.

It is found in the golgi apparatus. The protein resides in the golgi stack membrane. The catalysed reaction is 3-O-(beta-D-GlcA-(1-&gt;3)-beta-D-Gal-(1-&gt;3)-beta-D-Gal-(1-&gt;4)-beta-D-Xyl)-L-seryl-[protein] + UDP-N-acetyl-alpha-D-galactosamine = 3-O-(beta-D-GalNAc-(1-&gt;4)-beta-D-GlcA-(1-&gt;3)-beta-D-Gal-(1-&gt;3)-beta-D-Gal-(1-&gt;4)-beta-D-Xyl)-L-seryl-[protein] + UDP + H(+). In terms of biological role, transfers 1,4-N-acetylgalactosamine (GalNAc) from UDP-GalNAc to the non-reducing end of glucuronic acid (GlcUA). Required for addition of the first GalNAc to the core tetrasaccharide linker and for elongation of chondroitin chains. Important role in chondroitin chain biosynthesis in cartilage formation, and subsequent endochondral ossification. Moreover, is involved in the metabolism of aggrecan. The chain is Chondroitin sulfate N-acetylgalactosaminyltransferase 1 from Mus musculus (Mouse).